We begin with the raw amino-acid sequence, 363 residues long: Pyrimidine monooxygenase RutA (363 aa).

FMN-binding positions include 49–50 (IK), N115, E124, 140–141 (RY), and S190.

The protein belongs to the NtaA/SnaA/DszA monooxygenase family. RutA subfamily.

The catalysed reaction is uracil + FMNH2 + NADH + O2 = (Z)-3-ureidoacrylate + FMN + NAD(+) + H2O + H(+). The enzyme catalyses thymine + FMNH2 + NADH + O2 = (Z)-2-methylureidoacrylate + FMN + NAD(+) + H2O + H(+). Functionally, catalyzes the pyrimidine ring opening between N-3 and C-4 by an unusual flavin hydroperoxide-catalyzed mechanism, adding oxygen atoms in the process to yield ureidoacrylate peracid, that immediately reacts with FMN forming ureidoacrylate and FMN-N(5)-oxide. The FMN-N(5)-oxide reacts spontaneously with NADH to produce FMN. Requires the flavin reductase RutF to regenerate FMN in vivo. The sequence is that of Pyrimidine monooxygenase RutA from Escherichia coli O127:H6 (strain E2348/69 / EPEC).